A 545-amino-acid chain; its full sequence is ATP synthase subunit alpha (545 aa).

Residue 172 to 179 (GDRKTGKT) coordinates ATP. A disordered region spans residues 511-545 (FQTTDGTPVINEPEARPLGDDEVTKSQITVSRKTQ). Positions 523–534 (PEARPLGDDEVT) are enriched in basic and acidic residues. Polar residues predominate over residues 535–545 (KSQITVSRKTQ).

Belongs to the ATPase alpha/beta chains family. As to quaternary structure, F-type ATPases have 2 components, CF(1) - the catalytic core - and CF(0) - the membrane proton channel. CF(1) has five subunits: alpha(3), beta(3), gamma(1), delta(1), epsilon(1). CF(0) has three main subunits: a(1), b(2) and c(9-12). The alpha and beta chains form an alternating ring which encloses part of the gamma chain. CF(1) is attached to CF(0) by a central stalk formed by the gamma and epsilon chains, while a peripheral stalk is formed by the delta and b chains.

Its subcellular location is the cell membrane. It carries out the reaction ATP + H2O + 4 H(+)(in) = ADP + phosphate + 5 H(+)(out). Its function is as follows. Produces ATP from ADP in the presence of a proton gradient across the membrane. The alpha chain is a regulatory subunit. In Corynebacterium jeikeium (strain K411), this protein is ATP synthase subunit alpha.